Consider the following 430-residue polypeptide: Enolase (430 aa).

Gln163 is a (2R)-2-phosphoglycerate binding site. Glu205 functions as the Proton donor in the catalytic mechanism. Residues Asp242, Glu287, and Asp314 each contribute to the Mg(2+) site. Residues Lys339, Arg368, Ser369, and Lys390 each coordinate (2R)-2-phosphoglycerate. Catalysis depends on Lys339, which acts as the Proton acceptor.

Belongs to the enolase family. The cofactor is Mg(2+).

It localises to the cytoplasm. It is found in the secreted. Its subcellular location is the cell surface. The enzyme catalyses (2R)-2-phosphoglycerate = phosphoenolpyruvate + H2O. Its pathway is carbohydrate degradation; glycolysis; pyruvate from D-glyceraldehyde 3-phosphate: step 4/5. In terms of biological role, catalyzes the reversible conversion of 2-phosphoglycerate (2-PG) into phosphoenolpyruvate (PEP). It is essential for the degradation of carbohydrates via glycolysis. The sequence is that of Enolase from Clostridioides difficile (strain 630) (Peptoclostridium difficile).